The chain runs to 309 residues: Taste receptor type 2 member 66 (309 aa).

Residue methionine 1 is a topological domain, extracellular. Residues 2-22 (ITFLPIIFSILIVVTFVIGNF) traverse the membrane as a helical segment. Over 23-46 (ANGFIALANSIEWFKRQKISFADQ) the chain is Cytoplasmic. The helical transmembrane segment at 47-67 (ILTALAVPRVGLLWVLLLNWY) threads the bilayer. The Extracellular portion of the chain corresponds to 68–86 (ATELNPAFYSIEVRITAYN). The helical transmembrane segment at 87-107 (LWAVINHFSNWLATSLSIFYL) threads the bilayer. Over 108–126 (LKIANFSNLIFLRLKRRVK) the chain is Cytoplasmic. Residues 127–147 (SVVLVILLGPLLFLVCHLFVI) traverse the membrane as a helical segment. Residues 148–178 (NMNQIIWTKEYEGNMTWKIKLRSAMYLSNTT) lie on the Extracellular side of the membrane. 2 N-linked (GlcNAc...) asparagine glycosylation sites follow: asparagine 161 and asparagine 176. Residues 179–199 (VTILANLVPFTVTLISFLLLV) traverse the membrane as a helical segment. At 200–229 (CSLCKHLKKMQLHGKGSQDPSTKVHIKALQ) the chain is on the cytoplasmic side. A helical transmembrane segment spans residues 230 to 250 (TVISFLLLCAIYFVSVIISVW). At 251-259 (SFKNLENKP) the chain is on the extracellular side. The chain crosses the membrane as a helical span at residues 260–280 (VFMFCQAIGFSCSSAHPFILI). The Cytoplasmic portion of the chain corresponds to 281-309 (WGNKKLKQPFLSVLWQMRYWVKGEKPSSS).

This sequence belongs to the G-protein coupled receptor T2R family.

The protein localises to the membrane. Functionally, receptor that may play a role in the perception of bitterness and is gustducin-linked. May play a role in sensing the chemical composition of the gastrointestinal content. The activity of this receptor may stimulate alpha gustducin, mediate PLC-beta-2 activation and lead to the gating of TRPM5. This Pan paniscus (Pygmy chimpanzee) protein is Taste receptor type 2 member 66 (TAS2R66).